The chain runs to 447 residues: Multicopper oxidase mco (447 aa).

Over residues 1 to 25 (MMNMKEDKKNTMDMTNMKHHDERKK) the composition is skewed to basic and acidic residues. The segment at 1–29 (MMNMKEDKKNTMDMTNMKHHDERKKLNSS) is disordered. Residues His-107, His-109, His-147, His-149, His-375, His-378, His-380, His-428, Cys-429, His-430, His-434, and Met-439 each coordinate Cu cation.

The protein belongs to the multicopper oxidase family. Cu cation is required as a cofactor.

The protein resides in the cytoplasm. May be involved in copper homeostasis and oxidative stress response. The chain is Multicopper oxidase mco (mco) from Staphylococcus haemolyticus (strain JCSC1435).